Consider the following 178-residue polypeptide: RNA-binding protein (178 aa).

A disordered region spans residues 113 to 178 (PKIGSKNKKT…KGKGKRGGKR (66 aa)). The segment covering 168 to 178 (SKGKGKRGGKR) has biased composition (basic residues).

Belongs to the phytoreovirus RNA-binding protein family.

It is found in the host cytoplasm. Its function is as follows. Constituent of viral factories. Binds to ssRNA and dsRNA. This chain is RNA-binding protein, found in Wound tumor virus (WTV).